The sequence spans 331 residues: UPF0194 membrane protein YbhG (331 aa).

A signal peptide spans 1-15; it reads MKKPVVIGLAVVVLA. Residues 107 to 208 adopt a coiled-coil conformation; the sequence is EEIAQAAAAV…LNLQDSTLIA (102 aa).

This sequence belongs to the UPF0194 family.

Its subcellular location is the periplasm. This Escherichia coli O139:H28 (strain E24377A / ETEC) protein is UPF0194 membrane protein YbhG.